We begin with the raw amino-acid sequence, 232 residues long: MDKEDLKRQAAARALEEVRSGMKLGLGTGSTARHFVELLGEKVRGGLDVIGVPTSEVTRADAERCGIRLTTLDEIDRLDLTVDGADEVDTRLELIKGGGGALLREKIVAAASDRMIVIADESKWVDCLGKFPLPVEVIPFGLAATRRAIEKAFTQVGAAGQLKLRDGEAGHAFVTDGGHWIVDAHLGRIPDAPRLAKLLSEIPGVVEHGLFIGIASTVVLAGTEGIRTVERA.

Residues 28–31, 83–86, and 96–99 each bind substrate; these read TGST, DGAD, and KGGG. Glutamate 105 acts as the Proton acceptor in catalysis. Lysine 123 lines the substrate pocket.

Belongs to the ribose 5-phosphate isomerase family. Homodimer.

The catalysed reaction is aldehydo-D-ribose 5-phosphate = D-ribulose 5-phosphate. Its pathway is carbohydrate degradation; pentose phosphate pathway; D-ribose 5-phosphate from D-ribulose 5-phosphate (non-oxidative stage): step 1/1. In terms of biological role, catalyzes the reversible conversion of ribose-5-phosphate to ribulose 5-phosphate. The sequence is that of Ribose-5-phosphate isomerase A from Rhodopseudomonas palustris (strain BisB5).